We begin with the raw amino-acid sequence, 214 residues long: NAD(P)H-quinone oxidoreductase subunit 6, chloroplastic (214 aa).

The next 5 membrane-spanning stretches (helical) occupy residues 10 to 30 (FSLFFLEGAVLVGALGVVLLP), 32 to 52 (ILYSAFLLGGVLMSIAGIYLL), 61 to 81 (AQVLIYVGAINVLILFAIMLV), 102 to 122 (IIGLTCIGLAGFLIDMIVTTP), and 163 to 183 (LLPFEVISLLLLVTLVGAIVI).

The protein belongs to the complex I subunit 6 family. NDH is composed of at least 16 different subunits, 5 of which are encoded in the nucleus.

Its subcellular location is the plastid. The protein resides in the chloroplast thylakoid membrane. It carries out the reaction a plastoquinone + NADH + (n+1) H(+)(in) = a plastoquinol + NAD(+) + n H(+)(out). It catalyses the reaction a plastoquinone + NADPH + (n+1) H(+)(in) = a plastoquinol + NADP(+) + n H(+)(out). NDH shuttles electrons from NAD(P)H:plastoquinone, via FMN and iron-sulfur (Fe-S) centers, to quinones in the photosynthetic chain and possibly in a chloroplast respiratory chain. The immediate electron acceptor for the enzyme in this species is believed to be plastoquinone. Couples the redox reaction to proton translocation, and thus conserves the redox energy in a proton gradient. The protein is NAD(P)H-quinone oxidoreductase subunit 6, chloroplastic (ndhG) of Chlorokybus atmophyticus (Soil alga).